A 224-amino-acid polypeptide reads, in one-letter code: Adenylate kinase (224 aa).

G10–T15 is a binding site for ATP. The interval E30–V59 is NMP. Residues S31, R36, D57–V59, G85–R88, and Q92 contribute to the AMP site. Residues G126–D165 are LID. Residue R127 coordinates ATP. R162 and R174 together coordinate AMP. N211 lines the ATP pocket.

It belongs to the adenylate kinase family. In terms of assembly, monomer.

It is found in the cytoplasm. It catalyses the reaction AMP + ATP = 2 ADP. The protein operates within purine metabolism; AMP biosynthesis via salvage pathway; AMP from ADP: step 1/1. Functionally, catalyzes the reversible transfer of the terminal phosphate group between ATP and AMP. Plays an important role in cellular energy homeostasis and in adenine nucleotide metabolism. The chain is Adenylate kinase from Desulforapulum autotrophicum (strain ATCC 43914 / DSM 3382 / VKM B-1955 / HRM2) (Desulfobacterium autotrophicum).